A 317-amino-acid chain; its full sequence is E3 ubiquitin-protein ligase NRDP1 (317 aa).

The RING-type; degenerate zinc finger occupies Cys-18–Arg-57. The segment at Lys-78 to Leu-138 adopts an SIAH-type; degenerate zinc-finger fold.

In terms of assembly, interacts with USP8, ERBB3, PRKN and BIRC6. Interacts with CSF2RB, EPOR, IL3RA, MYD88 and TBK1. Interacts with Clec16a. Autoubiquitinated. Autoubiquitination leads to proteasomal degradation. Deubiquitinated by USP8 to get stabilized which induces apoptosis.

The enzyme catalyses S-ubiquitinyl-[E2 ubiquitin-conjugating enzyme]-L-cysteine + [acceptor protein]-L-lysine = [E2 ubiquitin-conjugating enzyme]-L-cysteine + N(6)-ubiquitinyl-[acceptor protein]-L-lysine.. It participates in protein modification; protein ubiquitination. Acts as E3 ubiquitin-protein ligase and regulates the degradation of target proteins. Polyubiquitinates MYD88. Negatively regulates MYD88-dependent production of pro-inflammatory cytokines. Can promote TRIF-dependent production of type I interferon and inhibits infection with vesicular stomatitis virus. Also promotes activation of TBK1 and IRF3. Involved in the ubiquitination of erythropoietin (EPO) and interleukin-3 (IL-3) receptors. Thus, through maintaining basal levels of cytokine receptors, RNF41 is involved in the control of hematopoietic progenitor cell differentiation into myeloerythroid lineages. Contributes to the maintenance of steady-state ERBB3 levels by mediating its growth factor-independent degradation. Involved in the degradation of the inhibitor of apoptosis BIRC6 and thus is an important regulator of cell death by promoting apoptosis. Also acts as a PRKN modifier that accelerates its degradation, resulting in a reduction of PRKN activity, influencing the balance of intracellular redox state. The RNF41-PRKN pathway regulates autophagosome-lysosome fusion during late mitophagy. Mitophagy is a selective form of autophagy necessary for mitochondrial quality control. This chain is E3 ubiquitin-protein ligase NRDP1 (Rnf41), found in Mus musculus (Mouse).